Reading from the N-terminus, the 166-residue chain is Large ribosomal subunit protein uL10 (166 aa).

This sequence belongs to the universal ribosomal protein uL10 family. Part of the ribosomal stalk of the 50S ribosomal subunit. The N-terminus interacts with L11 and the large rRNA to form the base of the stalk. The C-terminus forms an elongated spine to which L12 dimers bind in a sequential fashion forming a multimeric L10(L12)X complex.

Forms part of the ribosomal stalk, playing a central role in the interaction of the ribosome with GTP-bound translation factors. In Streptococcus pneumoniae (strain 70585), this protein is Large ribosomal subunit protein uL10.